We begin with the raw amino-acid sequence, 34 residues long: Photosystem II reaction center protein Psb30 (34 aa).

Residues 6–26 (VIGQLIATGAIMLAGPAVIVL) traverse the membrane as a helical segment.

This sequence belongs to the Psb30/Ycf12 family. In terms of assembly, PSII is composed of 1 copy each of membrane proteins PsbA, PsbB, PsbC, PsbD, PsbE, PsbF, PsbH, PsbI, PsbJ, PsbK, PsbL, PsbM, PsbT, PsbX, PsbY, PsbZ, Psb30/Ycf12, peripheral proteins of the oxygen-evolving complex and a large number of cofactors. It forms dimeric complexes.

The protein resides in the plastid. It localises to the chloroplast thylakoid membrane. Functionally, a core subunit of photosystem II (PSII), probably helps stabilize the reaction center. This Trieres chinensis (Marine centric diatom) protein is Photosystem II reaction center protein Psb30.